The sequence spans 342 residues: (+)-pulegone reductase (342 aa).

Residues 163–166, lysine 189, tyrosine 205, asparagine 229, 251–257, 281–283, and asparagine 331 contribute to the NADP(+) site; these read GSVG, CGMVSQY, and FVV.

It belongs to the NADP-dependent oxidoreductase L4BD family.

It localises to the cytoplasm. It catalyses the reaction (2R,5R)-isomenthone + NADP(+) = (R)-pulegone + NADPH + H(+). The catalysed reaction is (1R,4S)-menthone + NADP(+) = (R)-pulegone + NADPH + H(+). It participates in secondary metabolite biosynthesis; terpenoid biosynthesis. With respect to regulation, not inhibited by (+)-menthofuran. Functionally, monoterpene synthase that catalyzes the specific reduction of the 4,8-double bond of (+)-pulegone to produce both (-)-menthone and (+)-isomenthone in a 70:30 ratio. Unable to utilize either (-)-isopiperitenone or (+)-cis-isopulegone, or to catalyze the reverse reaction with (-)-menthone or (+)-isomenthone. Has an absolute requirement for NADPH. This is (+)-pulegone reductase from Mentha piperita (Peppermint).